The following is a 71-amino-acid chain: Putative defensin-like protein 303 (71 aa).

An N-terminal signal peptide occupies residues 1-25 (MKSNKATFFLGLLLVYAFCIMLIES). 3 disulfides stabilise this stretch: Cys27–Cys45, Cys33–Cys50, and Cys39–Cys52.

It belongs to the DEFL family.

It localises to the secreted. The protein is Putative defensin-like protein 303 of Arabidopsis thaliana (Mouse-ear cress).